The sequence spans 482 residues: Iroquois-class homeodomain protein irx-5 (482 aa).

The homeobox DNA-binding region spans 109 to 171 (DPAYRKNATR…NARRRLKKEN (63 aa)). Disordered regions lie at residues 173–307 (MTWT…HQSH) and 462–482 (QSQA…MSSI). Positions 182–198 (EDEEDDENIDLEKNEED) are enriched in acidic residues. The segment covering 199-256 (DPRKLEEKGDQDGDAGDQKRSPSAVDFDRLEGEVRQGKELDQTRSDSEQNEVEERNDL) has biased composition (basic and acidic residues). Pro residues predominate over residues 264 to 273 (PTSPLCPPDQ). Basic residues predominate over residues 284-305 (HRHTVHNHHHQSIQQLHHHSHQ). The segment covering 467–482 (LNKDTPYEMKKGMSSI) has biased composition (basic and acidic residues).

This sequence belongs to the TALE/IRO homeobox family. As to expression, expressed in the neural plate in overlapping patterns with other irx members, which all share an anterior border of expression. Broadly expressed in the tailbud rhombencephalon (hindbrain). Outside the nervous system and at tailbud stages, expressed in the developing otic vesicle and branchial arches.

It is found in the nucleus. Its function is as follows. Acts partially redundantly with other irx members in neural patterning. Required for formation of the posterior forebrain, midbrain, hindbrain, and to a lesser extent, spinal cord. Patterns the neuroectoderm in both the anterior/posterior and dorsal/ventral axes. Does not appear to play a role in pronephros kidney development. Involved in craniofacial and gonadal development. Modulates the migration of progenitor cell populations in branchial arches and gonads by repressing CXCL12. In Xenopus tropicalis (Western clawed frog), this protein is Iroquois-class homeodomain protein irx-5.